The primary structure comprises 269 residues: Bis(5'-nucleosyl)-tetraphosphatase, symmetrical (269 aa).

This sequence belongs to the Ap4A hydrolase family.

It carries out the reaction P(1),P(4)-bis(5'-adenosyl) tetraphosphate + H2O = 2 ADP + 2 H(+). Its function is as follows. Hydrolyzes diadenosine 5',5'''-P1,P4-tetraphosphate to yield ADP. The protein is Bis(5'-nucleosyl)-tetraphosphatase, symmetrical of Vibrio cholerae serotype O1 (strain ATCC 39541 / Classical Ogawa 395 / O395).